Reading from the N-terminus, the 100-residue chain is Glutamyl-tRNA(Gln) amidotransferase subunit C (100 aa).

This sequence belongs to the GatC family. In terms of assembly, heterotrimer of A, B and C subunits.

The enzyme catalyses L-glutamyl-tRNA(Gln) + L-glutamine + ATP + H2O = L-glutaminyl-tRNA(Gln) + L-glutamate + ADP + phosphate + H(+). It carries out the reaction L-aspartyl-tRNA(Asn) + L-glutamine + ATP + H2O = L-asparaginyl-tRNA(Asn) + L-glutamate + ADP + phosphate + 2 H(+). Its function is as follows. Allows the formation of correctly charged Asn-tRNA(Asn) or Gln-tRNA(Gln) through the transamidation of misacylated Asp-tRNA(Asn) or Glu-tRNA(Gln) in organisms which lack either or both of asparaginyl-tRNA or glutaminyl-tRNA synthetases. The reaction takes place in the presence of glutamine and ATP through an activated phospho-Asp-tRNA(Asn) or phospho-Glu-tRNA(Gln). The polypeptide is Glutamyl-tRNA(Gln) amidotransferase subunit C (Rickettsia conorii (strain ATCC VR-613 / Malish 7)).